We begin with the raw amino-acid sequence, 305 residues long: Plant-type L-asparaginase (305 aa).

Residue T175 is the Nucleophile of the active site. Substrate-binding positions include 202 to 205 and 224 to 227; these read RVGD and TGLG.

It belongs to the Ntn-hydrolase family. Heterotetramer of two alpha and two beta chains arranged as a dimer of alpha/beta heterodimers. Autocleaved. Generates the alpha and beta subunits. The N-terminal residue of the beta subunit is thought to be responsible for the nucleophile hydrolase activity.

The enzyme catalyses L-asparagine + H2O = L-aspartate + NH4(+). Functionally, catalyzes the hydrolysis of L-asparagine into L-aspartate and ammonia. The protein is Plant-type L-asparaginase of Pyrococcus horikoshii (strain ATCC 700860 / DSM 12428 / JCM 9974 / NBRC 100139 / OT-3).